The following is an 83-amino-acid chain: DNA-directed RNA polymerase subunit Rpo5 (83 aa).

It belongs to the archaeal Rpo5/eukaryotic RPB5 RNA polymerase subunit family. Part of the RNA polymerase complex.

It localises to the cytoplasm. It carries out the reaction RNA(n) + a ribonucleoside 5'-triphosphate = RNA(n+1) + diphosphate. Its function is as follows. DNA-dependent RNA polymerase (RNAP) catalyzes the transcription of DNA into RNA using the four ribonucleoside triphosphates as substrates. This is DNA-directed RNA polymerase subunit Rpo5 from Nitrosopumilus maritimus (strain SCM1).